The following is a 157-amino-acid chain: ATP synthase subunit b (157 aa).

Residues 7–27 (LIAQLVVFFILAWFTMKFVWP) form a helical membrane-spanning segment.

Belongs to the ATPase B chain family. As to quaternary structure, F-type ATPases have 2 components, F(1) - the catalytic core - and F(0) - the membrane proton channel. F(1) has five subunits: alpha(3), beta(3), gamma(1), delta(1), epsilon(1). F(0) has three main subunits: a(1), b(2) and c(10-14). The alpha and beta chains form an alternating ring which encloses part of the gamma chain. F(1) is attached to F(0) by a central stalk formed by the gamma and epsilon chains, while a peripheral stalk is formed by the delta and b chains.

Its subcellular location is the cell inner membrane. F(1)F(0) ATP synthase produces ATP from ADP in the presence of a proton or sodium gradient. F-type ATPases consist of two structural domains, F(1) containing the extramembraneous catalytic core and F(0) containing the membrane proton channel, linked together by a central stalk and a peripheral stalk. During catalysis, ATP synthesis in the catalytic domain of F(1) is coupled via a rotary mechanism of the central stalk subunits to proton translocation. In terms of biological role, component of the F(0) channel, it forms part of the peripheral stalk, linking F(1) to F(0). This is ATP synthase subunit b from Azoarcus sp. (strain BH72).